We begin with the raw amino-acid sequence, 472 residues long: Tryptophanase (472 aa).

Residue Lys-270 is modified to N6-(pyridoxal phosphate)lysine.

Belongs to the beta-eliminating lyase family. In terms of assembly, homotetramer. Requires pyridoxal 5'-phosphate as cofactor.

The catalysed reaction is L-tryptophan + H2O = indole + pyruvate + NH4(+). It participates in amino-acid degradation; L-tryptophan degradation via pyruvate pathway; indole and pyruvate from L-tryptophan: step 1/1. In Haemophilus influenzae, this protein is Tryptophanase (tnaA).